The chain runs to 200 residues: Charged multivesicular body protein 6 (200 aa).

Gly2 carries N-myristoyl glycine lipidation. Residues 10-145 (QSRVTEQDRA…YQRQIDELLA (136 aa)) adopt a coiled-coil conformation. Ser119 is modified (phosphoserine). Thr130 is subject to Phosphothreonine. A Type-2 MIT-interacting motif motif is present at residues 168 to 179 (MELPEVPSEPLP). The disordered stretch occupies residues 168 to 200 (MELPEVPSEPLPDRNPEAPAKARSRQAELVAAS).

This sequence belongs to the SNF7 family. As to quaternary structure, probable core component of the endosomal sorting required for transport complex III (ESCRT-III). ESCRT-III components are thought to multimerize to form a flat lattice on the perimeter membrane of the endosome. Several assembly forms of ESCRT-III may exist that interact and act sequentially. Interacts with VPS4A; the interaction is direct. Interacts with VPS4B; the interaction is direct. Interacts with CHMP4A, CHMP4B and CHMP4C. Interacts with SNF8, VPS25 and VPS36. Post-translationally, ISGylated in a CHMP5-dependent manner. Isgylation weakens its interaction with VPS4A.

The protein resides in the endomembrane system. It localises to the endosome membrane. Its subcellular location is the late endosome membrane. The protein localises to the membrane. Functionally, probable core component of the endosomal sorting required for transport complex III (ESCRT-III) which is involved in multivesicular bodies (MVBs) formation and sorting of endosomal cargo proteins into MVBs. MVBs contain intraluminal vesicles (ILVs) that are generated by invagination and scission from the limiting membrane of the endosome and mostly are delivered to lysosomes enabling degradation of membrane proteins, such as stimulated growth factor receptors, lysosomal enzymes and lipids. The MVB pathway appears to require the sequential function of ESCRT-O, -I,-II and -III complexes. ESCRT-III proteins mostly dissociate from the invaginating membrane before the ILV is released. The ESCRT machinery also functions in topologically equivalent membrane fission events, such as the terminal stages of cytokinesis. ESCRT-III proteins are believed to mediate the necessary vesicle extrusion and/or membrane fission activities, possibly in conjunction with the AAA ATPase VPS4. In the ESCRT-III complex, it probably serves as an acceptor for the ESCRT-II complex on endosomal membranes. This is Charged multivesicular body protein 6 (Chmp6) from Mus musculus (Mouse).